The following is a 447-amino-acid chain: Hemopexin (447 aa).

The signal sequence occupies residues 1–18 (MRLIQALSLCLALSLSLA). The tract at residues 20-44 (PPQHKEDHSHKGKPGGEGHKHELHH) is disordered. The span at 22-44 (QHKEDHSHKGKPGGEGHKHELHH) shows a compositional bias: basic and acidic residues. Hemopexin repeat units follow at residues 53–93 (GIEF…FPEL), 99–151 (LGHV…FPGI), 152–197 (PDHL…FKSM), 198–243 (PNCT…FMRC), 262–304 (RVHL…FKEL), 305–351 (HSEV…VLGI), 352–395 (EGPV…TITQ), and 396–441 (FKRI…VSQQ). Asparagine 87 carries N-linked (GlcNAc...) asparagine glycosylation. N-linked (GlcNAc...) asparagine glycosylation is found at asparagine 168 and asparagine 199. Histidine 293 lines the heme pocket.

The protein belongs to the hemopexin family.

The protein localises to the secreted. Its function is as follows. Binds heme and transports it to the liver for breakdown and iron recovery, after which the free hemopexin returns to the circulation. This Danio rerio (Zebrafish) protein is Hemopexin.